A 187-amino-acid polypeptide reads, in one-letter code: UPF0301 protein Sbal195_3177 (187 aa).

The protein belongs to the UPF0301 (AlgH) family.

The polypeptide is UPF0301 protein Sbal195_3177 (Shewanella baltica (strain OS195)).